Consider the following 458-residue polypeptide: Transcription factor verZ (458 aa).

Residues 117-144 constitute a DNA-binding region (zn(2)-C6 fungal-type); it reads CDRCQAAKVKCGHEKPSCRRCTYHKVEC. 2 disordered regions span residues 153–256 and 435–458; these read GRPR…MQSM and MEEE…EDGK. 3 stretches are compositionally biased toward polar residues: residues 167-186, 193-207, and 223-235; these read PSPQ…SKSA, FTGT…QSPV, and RAEP…TTNF.

It localises to the nucleus. Functionally, transcription factor; part of the gene cluster that mediates the biosynthesis of 11'-deoxyverticillin A, one of the dimeric epipolythiodioxopiperazines (ETPs) from the verticillin family that act as mycotoxins. 11'-deoxyverticillin A is required for normal conidiation. Directly binds the consensus motif 5'-(T/C)(C/A)(G/T)GN3CC(G/T)(A/G)(G/C)-3' localized in the upstream regions of the verticillin biosynthetic genes. In Clonostachys rogersoniana, this protein is Transcription factor verZ.